The sequence spans 315 residues: Methionyl-tRNA formyltransferase (315 aa).

113–116 is a (6S)-5,6,7,8-tetrahydrofolate binding site; the sequence is SLLP.

It belongs to the Fmt family.

The catalysed reaction is L-methionyl-tRNA(fMet) + (6R)-10-formyltetrahydrofolate = N-formyl-L-methionyl-tRNA(fMet) + (6S)-5,6,7,8-tetrahydrofolate + H(+). In terms of biological role, attaches a formyl group to the free amino group of methionyl-tRNA(fMet). The formyl group appears to play a dual role in the initiator identity of N-formylmethionyl-tRNA by promoting its recognition by IF2 and preventing the misappropriation of this tRNA by the elongation apparatus. In Escherichia coli O127:H6 (strain E2348/69 / EPEC), this protein is Methionyl-tRNA formyltransferase.